The sequence spans 562 residues: Formate--tetrahydrofolate ligase (562 aa).

71 to 78 serves as a coordination point for ATP; it reads TPAGEGKS.

It belongs to the formate--tetrahydrofolate ligase family.

The catalysed reaction is (6S)-5,6,7,8-tetrahydrofolate + formate + ATP = (6R)-10-formyltetrahydrofolate + ADP + phosphate. It participates in one-carbon metabolism; tetrahydrofolate interconversion. The protein is Formate--tetrahydrofolate ligase of Bacillus cereus (strain ATCC 14579 / DSM 31 / CCUG 7414 / JCM 2152 / NBRC 15305 / NCIMB 9373 / NCTC 2599 / NRRL B-3711).